A 79-amino-acid polypeptide reads, in one-letter code: Acyl carrier protein (79 aa).

Residues 2-77 (SDVAERVKKI…DAVNFLEKAT (76 aa)) enclose the Carrier domain. At serine 37 the chain carries O-(pantetheine 4'-phosphoryl)serine.

Belongs to the acyl carrier protein (ACP) family. In terms of processing, 4'-phosphopantetheine is transferred from CoA to a specific serine of apo-ACP by AcpS. This modification is essential for activity because fatty acids are bound in thioester linkage to the sulfhydryl of the prosthetic group.

It localises to the cytoplasm. The protein operates within lipid metabolism; fatty acid biosynthesis. Its function is as follows. Carrier of the growing fatty acid chain in fatty acid biosynthesis. In Methylocella silvestris (strain DSM 15510 / CIP 108128 / LMG 27833 / NCIMB 13906 / BL2), this protein is Acyl carrier protein.